Here is a 394-residue protein sequence, read N- to C-terminus: Elongation factor Tu (394 aa).

A tr-type G domain is found at 10–204; that stretch reads KPHINVGTIG…YLDTYIPEPK (195 aa). The interval 19–26 is G1; that stretch reads GHVDHGKT. Position 19-26 (19-26) interacts with GTP; sequence GHVDHGKT. Thr26 provides a ligand contact to Mg(2+). Positions 60-64 are G2; sequence GITIN. The interval 81–84 is G3; it reads DCPG. Residues 81-85 and 136-139 each bind GTP; these read DCPGH and NKCD. The tract at residues 136 to 139 is G4; that stretch reads NKCD. The segment at 174-176 is G5; that stretch reads SAL.

The protein belongs to the TRAFAC class translation factor GTPase superfamily. Classic translation factor GTPase family. EF-Tu/EF-1A subfamily. As to quaternary structure, monomer.

It is found in the cytoplasm. The catalysed reaction is GTP + H2O = GDP + phosphate + H(+). In terms of biological role, GTP hydrolase that promotes the GTP-dependent binding of aminoacyl-tRNA to the A-site of ribosomes during protein biosynthesis. The protein is Elongation factor Tu of Buchnera aphidicola subsp. Baizongia pistaciae (strain Bp).